The chain runs to 178 residues: Large ribosomal subunit protein uL6 (178 aa).

The protein belongs to the universal ribosomal protein uL6 family. As to quaternary structure, part of the 50S ribosomal subunit.

Its function is as follows. This protein binds to the 23S rRNA, and is important in its secondary structure. It is located near the subunit interface in the base of the L7/L12 stalk, and near the tRNA binding site of the peptidyltransferase center. This chain is Large ribosomal subunit protein uL6, found in Geobacillus kaustophilus (strain HTA426).